A 697-amino-acid polypeptide reads, in one-letter code: Glycine--tRNA ligase beta subunit (697 aa).

The protein belongs to the class-II aminoacyl-tRNA synthetase family. As to quaternary structure, tetramer of two alpha and two beta subunits.

Its subcellular location is the cytoplasm. It catalyses the reaction tRNA(Gly) + glycine + ATP = glycyl-tRNA(Gly) + AMP + diphosphate. This Solidesulfovibrio magneticus (strain ATCC 700980 / DSM 13731 / RS-1) (Desulfovibrio magneticus) protein is Glycine--tRNA ligase beta subunit.